The following is a 204-amino-acid chain: Large ribosomal subunit protein bL9 (204 aa).

The interval 180-204 (DDIGGAASDDEGDAPAAAADEEESK) is disordered. The segment covering 187–204 (SDDEGDAPAAAADEEESK) has biased composition (acidic residues).

It belongs to the bacterial ribosomal protein bL9 family.

In terms of biological role, binds to the 23S rRNA. The polypeptide is Large ribosomal subunit protein bL9 (Ruegeria sp. (strain TM1040) (Silicibacter sp.)).